Here is a 310-residue protein sequence, read N- to C-terminus: AT-hook motif nuclear-localized protein 15 (310 aa).

Disordered stretches follow at residues 15 to 112 (VESP…KESP) and 239 to 310 (EEEQ…PPSY). Polar residues-rich tracts occupy residues 31 to 41 (SNNNNPPTMTR) and 51 to 67 (TTNN…SQEE). The a.T hook DNA-binding region spans 88 to 100 (RRPRGRPPGSKNK). A compositionally biased stretch (low complexity) spans 94 to 104 (PPGSKNKPKSP). The PPC domain maps to 112–251 (PNSLQSHVLE…QQQEQPLQLE (140 aa)). The span at 301 to 310 (GPPPRAPPSY) shows a compositional bias: pro residues.

The protein resides in the nucleus. In terms of biological role, transcription factor that specifically binds AT-rich DNA sequences related to the nuclear matrix attachment regions (MARs). Binds the DNA sequence GNFEI (GA-negative feedback element I) in the GA3OX1 promoter. Negatively regulates plant innate immunity (PTI) to pathogens through the down-regulation of the PAMP-triggered FRK1 expression. This is AT-hook motif nuclear-localized protein 15 from Arabidopsis thaliana (Mouse-ear cress).